Here is a 180-residue protein sequence, read N- to C-terminus: NADH-quinone oxidoreductase subunit I (180 aa).

4Fe-4S ferredoxin-type domains are found at residues 50-80 and 90-119; these read LTRD…LQKA and EFFR…LTPD. Residues Cys-60, Cys-63, Cys-66, Cys-70, Cys-99, Cys-102, Cys-105, and Cys-109 each contribute to the [4Fe-4S] cluster site.

The protein belongs to the complex I 23 kDa subunit family. As to quaternary structure, NDH-1 is composed of 14 different subunits. Subunits NuoA, H, J, K, L, M, N constitute the membrane sector of the complex. The cofactor is [4Fe-4S] cluster.

It localises to the cell inner membrane. The catalysed reaction is a quinone + NADH + 5 H(+)(in) = a quinol + NAD(+) + 4 H(+)(out). NDH-1 shuttles electrons from NADH, via FMN and iron-sulfur (Fe-S) centers, to quinones in the respiratory chain. The immediate electron acceptor for the enzyme in this species is believed to be ubiquinone. Couples the redox reaction to proton translocation (for every two electrons transferred, four hydrogen ions are translocated across the cytoplasmic membrane), and thus conserves the redox energy in a proton gradient. This is NADH-quinone oxidoreductase subunit I from Acinetobacter baumannii (strain ACICU).